Consider the following 275-residue polypeptide: Ditrans,polycis-undecaprenyl-diphosphate synthase ((2E,6E)-farnesyl-diphosphate specific) (275 aa).

Aspartate 45 is a catalytic residue. Aspartate 45 contacts Mg(2+). Residues 46–49, tryptophan 50, arginine 58, histidine 62, and 90–92 each bind substrate; these read GNGR and SSE. Residue asparagine 93 is the Proton acceptor of the active site. Substrate-binding positions include tryptophan 94, arginine 96, arginine 213, and 219–221; that span reads RIS. Glutamate 232 provides a ligand contact to Mg(2+).

The protein belongs to the UPP synthase family. In terms of assembly, homodimer. The cofactor is Mg(2+).

It catalyses the reaction 8 isopentenyl diphosphate + (2E,6E)-farnesyl diphosphate = di-trans,octa-cis-undecaprenyl diphosphate + 8 diphosphate. Functionally, catalyzes the sequential condensation of isopentenyl diphosphate (IPP) with (2E,6E)-farnesyl diphosphate (E,E-FPP) to yield (2Z,6Z,10Z,14Z,18Z,22Z,26Z,30Z,34E,38E)-undecaprenyl diphosphate (di-trans,octa-cis-UPP). UPP is the precursor of glycosyl carrier lipid in the biosynthesis of bacterial cell wall polysaccharide components such as peptidoglycan and lipopolysaccharide. This chain is Ditrans,polycis-undecaprenyl-diphosphate synthase ((2E,6E)-farnesyl-diphosphate specific), found in Shewanella oneidensis (strain ATCC 700550 / JCM 31522 / CIP 106686 / LMG 19005 / NCIMB 14063 / MR-1).